Here is a 337-residue protein sequence, read N- to C-terminus: Probable cytosolic iron-sulfur protein assembly protein 1 (337 aa).

7 WD repeats span residues 11-50, 57-96, 109-148, 155-194, 199-240, 252-290, and 301-337; these read LHND…ENLL, VHKK…LEEG, GHEN…EEYE, EHSQ…WECA, GHEG…EDDQ, AHRS…SEVS, and AHTV…NYQD.

This sequence belongs to the WD repeat CIA1 family. Interacts with NAR1.

Its subcellular location is the cytoplasm. The protein resides in the nucleus. In terms of biological role, essential component of the cytosolic iron-sulfur (Fe/S) protein assembly machinery. Required for the maturation of extramitochondrial Fe/S proteins. In Candida glabrata (strain ATCC 2001 / BCRC 20586 / JCM 3761 / NBRC 0622 / NRRL Y-65 / CBS 138) (Yeast), this protein is Probable cytosolic iron-sulfur protein assembly protein 1.